Here is a 618-residue protein sequence, read N- to C-terminus: 1-deoxy-D-xylulose-5-phosphate synthase (618 aa).

Thiamine diphosphate contacts are provided by residues histidine 70 and 111-113; that span reads GHS. Aspartate 142 contributes to the Mg(2+) binding site. Residues 143–144, asparagine 171, tyrosine 278, and glutamate 360 contribute to the thiamine diphosphate site; that span reads GS. Mg(2+) is bound at residue asparagine 171.

The protein belongs to the transketolase family. DXPS subfamily. In terms of assembly, homodimer. Mg(2+) serves as cofactor. Requires thiamine diphosphate as cofactor.

The enzyme catalyses D-glyceraldehyde 3-phosphate + pyruvate + H(+) = 1-deoxy-D-xylulose 5-phosphate + CO2. It participates in metabolic intermediate biosynthesis; 1-deoxy-D-xylulose 5-phosphate biosynthesis; 1-deoxy-D-xylulose 5-phosphate from D-glyceraldehyde 3-phosphate and pyruvate: step 1/1. Functionally, catalyzes the acyloin condensation reaction between C atoms 2 and 3 of pyruvate and glyceraldehyde 3-phosphate to yield 1-deoxy-D-xylulose-5-phosphate (DXP). The sequence is that of 1-deoxy-D-xylulose-5-phosphate synthase from Helicobacter pylori (strain J99 / ATCC 700824) (Campylobacter pylori J99).